We begin with the raw amino-acid sequence, 1113 residues long: Tudor domain-containing protein 7 (1113 aa).

HTH OST-type domains lie at Glu3–Ala76 and Lys249–Lys318. Residues Glu320–Pro334 show a composition bias toward basic and acidic residues. The disordered stretch occupies residues Glu320–Val352. An HTH OST-type 3 domain is found at Val352–Leu421. 2 Tudor domains span residues Thr528 to Leu585 and Leu718 to Glu775. Positions Ser873–Ser895 are disordered. Residue Ser874 is modified to Phosphoserine. A compositionally biased stretch (polar residues) spans Pro875–Ala884. The segment at Gly876 to Asn1113 is interaction with CDK17. An interaction with CABLES1 region spans residues Thr908 to Asn1113.

This sequence belongs to the TDRD7 family. Found in a mRNP complex, at least composed of TDRD1, TDRD6, TDRD7 and DDX4. Found in a complex containing CABLES1, CDK16 and CDK17. Interacts with CABLES1, CDK17 and PIWIL1. As to expression, expressed in brain and testis.

The protein localises to the cytoplasm. Its function is as follows. Component of specific cytoplasmic RNA granules involved in post-transcriptional regulation of specific genes: probably acts by binding to specific mRNAs and regulating their translation. Required for lens transparency during lens development, by regulating translation of genes such as CRYBB3 and HSPB1 in the developing lens. Also required during spermatogenesis. In Rattus norvegicus (Rat), this protein is Tudor domain-containing protein 7 (Tdrd7).